The following is a 145-amino-acid chain: Large ribosomal subunit protein bL19 (145 aa).

The protein belongs to the bacterial ribosomal protein bL19 family.

Functionally, this protein is located at the 30S-50S ribosomal subunit interface and may play a role in the structure and function of the aminoacyl-tRNA binding site. The sequence is that of Large ribosomal subunit protein bL19 from Brucella anthropi (strain ATCC 49188 / DSM 6882 / CCUG 24695 / JCM 21032 / LMG 3331 / NBRC 15819 / NCTC 12168 / Alc 37) (Ochrobactrum anthropi).